Here is a 111-residue protein sequence, read N- to C-terminus: Large ribosomal subunit protein P2-2 (111 aa).

Positions 86-111 are disordered; it reads APAAAAAKKDEPEEEADDDMGFGLFD.

This sequence belongs to the eukaryotic ribosomal protein P1/P2 family. In terms of assembly, P1 and P2 exist as dimers at the large ribosomal subunit. Phosphorylated.

Functionally, plays an important role in the elongation step of protein synthesis. This Leishmania infantum protein is Large ribosomal subunit protein P2-2 (LIP').